Reading from the N-terminus, the 237-residue chain is Purine nucleoside phosphorylase DeoD-type (237 aa).

A purine D-ribonucleoside is bound at residue histidine 4. Phosphate is bound by residues glycine 20, arginine 24, arginine 43, and 87–90 (RVGT). A purine D-ribonucleoside contacts are provided by residues 179–181 (EME) and 203–204 (SD). Catalysis depends on aspartate 204, which acts as the Proton donor.

It belongs to the PNP/UDP phosphorylase family. Homohexamer; trimer of homodimers.

It carries out the reaction a purine D-ribonucleoside + phosphate = a purine nucleobase + alpha-D-ribose 1-phosphate. It catalyses the reaction a purine 2'-deoxy-D-ribonucleoside + phosphate = a purine nucleobase + 2-deoxy-alpha-D-ribose 1-phosphate. Catalyzes the reversible phosphorolytic breakdown of the N-glycosidic bond in the beta-(deoxy)ribonucleoside molecules, with the formation of the corresponding free purine bases and pentose-1-phosphate. The sequence is that of Purine nucleoside phosphorylase DeoD-type from Exiguobacterium sp. (strain ATCC BAA-1283 / AT1b).